The sequence spans 400 residues: Tryptophan synthase beta chain (400 aa).

Lys92 bears the N6-(pyridoxal phosphate)lysine mark.

Belongs to the TrpB family. As to quaternary structure, tetramer of two alpha and two beta chains. Requires pyridoxal 5'-phosphate as cofactor.

It catalyses the reaction (1S,2R)-1-C-(indol-3-yl)glycerol 3-phosphate + L-serine = D-glyceraldehyde 3-phosphate + L-tryptophan + H2O. The protein operates within amino-acid biosynthesis; L-tryptophan biosynthesis; L-tryptophan from chorismate: step 5/5. In terms of biological role, the beta subunit is responsible for the synthesis of L-tryptophan from indole and L-serine. This chain is Tryptophan synthase beta chain, found in Leptospira borgpetersenii serovar Hardjo-bovis (strain JB197).